Here is a 150-residue protein sequence, read N- to C-terminus: MKVVIQRVSQASVTIDSKIVAKIQKGLLILVGIEDSDNQEDINWLSSKIINLRIFEDKNEVMNLSVKDINGEIIVVSQFTLQALTKKGNRPSYIKASKPEIAIPLYQSFVSQLETELGKKVQTGIFGADMKVSLINDGPVTIIIDSKNKE.

The Gly-cisPro motif, important for rejection of L-amino acids signature appears at 138–139; that stretch reads GP.

It belongs to the DTD family. As to quaternary structure, homodimer.

The protein localises to the cytoplasm. It carries out the reaction glycyl-tRNA(Ala) + H2O = tRNA(Ala) + glycine + H(+). The enzyme catalyses a D-aminoacyl-tRNA + H2O = a tRNA + a D-alpha-amino acid + H(+). Functionally, an aminoacyl-tRNA editing enzyme that deacylates mischarged D-aminoacyl-tRNAs. Also deacylates mischarged glycyl-tRNA(Ala), protecting cells against glycine mischarging by AlaRS. Acts via tRNA-based rather than protein-based catalysis; rejects L-amino acids rather than detecting D-amino acids in the active site. By recycling D-aminoacyl-tRNA to D-amino acids and free tRNA molecules, this enzyme counteracts the toxicity associated with the formation of D-aminoacyl-tRNA entities in vivo and helps enforce protein L-homochirality. The chain is D-aminoacyl-tRNA deacylase from Flavobacterium psychrophilum (strain ATCC 49511 / DSM 21280 / CIP 103535 / JIP02/86).